A 252-amino-acid chain; its full sequence is Imidazole glycerol phosphate synthase subunit HisF (252 aa).

Catalysis depends on residues Asp-11 and Asp-130.

The protein belongs to the HisA/HisF family. As to quaternary structure, heterodimer of HisH and HisF.

It is found in the cytoplasm. The catalysed reaction is 5-[(5-phospho-1-deoxy-D-ribulos-1-ylimino)methylamino]-1-(5-phospho-beta-D-ribosyl)imidazole-4-carboxamide + L-glutamine = D-erythro-1-(imidazol-4-yl)glycerol 3-phosphate + 5-amino-1-(5-phospho-beta-D-ribosyl)imidazole-4-carboxamide + L-glutamate + H(+). It functions in the pathway amino-acid biosynthesis; L-histidine biosynthesis; L-histidine from 5-phospho-alpha-D-ribose 1-diphosphate: step 5/9. Its function is as follows. IGPS catalyzes the conversion of PRFAR and glutamine to IGP, AICAR and glutamate. The HisF subunit catalyzes the cyclization activity that produces IGP and AICAR from PRFAR using the ammonia provided by the HisH subunit. This is Imidazole glycerol phosphate synthase subunit HisF from Lacticaseibacillus paracasei (strain ATCC 334 / BCRC 17002 / CCUG 31169 / CIP 107868 / KCTC 3260 / NRRL B-441) (Lactobacillus paracasei).